The chain runs to 356 residues: 3-isopropylmalate dehydrogenase (356 aa).

The substrate site is built by arginine 95, arginine 105, arginine 133, and aspartate 223. Mg(2+)-binding residues include aspartate 223, aspartate 247, and aspartate 251. Position 281–293 (281–293 (GSAPDIAGQNKAN)) interacts with NAD(+).

Belongs to the isocitrate and isopropylmalate dehydrogenases family. LeuB type 1 subfamily. Homodimer. The cofactor is Mg(2+). It depends on Mn(2+) as a cofactor.

The protein localises to the cytoplasm. It carries out the reaction (2R,3S)-3-isopropylmalate + NAD(+) = 4-methyl-2-oxopentanoate + CO2 + NADH. Its pathway is amino-acid biosynthesis; L-leucine biosynthesis; L-leucine from 3-methyl-2-oxobutanoate: step 3/4. In terms of biological role, catalyzes the oxidation of 3-carboxy-2-hydroxy-4-methylpentanoate (3-isopropylmalate) to 3-carboxy-4-methyl-2-oxopentanoate. The product decarboxylates to 4-methyl-2 oxopentanoate. The sequence is that of 3-isopropylmalate dehydrogenase from Neisseria meningitidis serogroup B (strain ATCC BAA-335 / MC58).